Reading from the N-terminus, the 144-residue chain is uncharacterized protein (144 aa).

Residues 23-82 (EELYKKLENNLRKIETSYLDSKHCQDFKRKIEYYKIVPLISETKEIIKVLIQKIETLEIK) adopt a coiled-coil conformation.

This is an uncharacterized protein from Acanthamoeba polyphaga mimivirus (APMV).